Consider the following 318-residue polypeptide: NAD kinase (318 aa).

Asp-80 functions as the Proton acceptor in the catalytic mechanism. NAD(+)-binding positions include 80–81, Arg-85, 155–156, Asp-185, and 196–201; these read DG, NE, and TAYAFS.

The protein belongs to the NAD kinase family. The cofactor is a divalent metal cation.

It is found in the cytoplasm. It carries out the reaction NAD(+) + ATP = ADP + NADP(+) + H(+). In terms of biological role, involved in the regulation of the intracellular balance of NAD and NADP, and is a key enzyme in the biosynthesis of NADP. Catalyzes specifically the phosphorylation on 2'-hydroxyl of the adenosine moiety of NAD to yield NADP. In Corynebacterium efficiens (strain DSM 44549 / YS-314 / AJ 12310 / JCM 11189 / NBRC 100395), this protein is NAD kinase.